A 503-amino-acid polypeptide reads, in one-letter code: UPF0522 protein C (503 aa).

Positions 1–18 are cleaved as a signal peptide; sequence MKLFILIILSICLALVNS. 3 N-linked (GlcNAc...) asparagine glycosylation sites follow: asparagine 330, asparagine 337, and asparagine 370.

This sequence belongs to the UPF0522 family.

The protein resides in the secreted. This chain is UPF0522 protein C, found in Dictyostelium discoideum (Social amoeba).